A 357-amino-acid polypeptide reads, in one-letter code: Prostaglandin E2 receptor EP2 subtype (357 aa).

At 1–24 (MDNSFNDSRRVENCESRQYLLSDE) the chain is on the extracellular side. An N-linked (GlcNAc...) asparagine glycan is attached at Asn6. A helical transmembrane segment spans residues 25 to 48 (SPAISSVMFTAGVLGNLIALALLA). At 49 to 66 (RRWRGDTGCSAGSRTSIS) the chain is on the cytoplasmic side. Residues 67 to 92 (LFHVLVTELVLTDLLGTCLISPVVLA) traverse the membrane as a helical segment. At 93–112 (SYSRNQTLVALAPESRACTY) the chain is on the extracellular side. A disulfide bond links Cys110 and Cys188. Residues 113 to 133 (FAFTMTFFSLATMLMLFAMAL) form a helical membrane-spanning segment. At 134 to 152 (ERYLAIGHPYFYRRRVSRR) the chain is on the cytoplasmic side. The chain crosses the membrane as a helical span at residues 153 to 177 (GGLAVLPAIYGVSLLFCSLPLLNYG). Topologically, residues 178–199 (EYVQYCPGTWCFIQHGRTAYLQ) are extracellular. A helical transmembrane segment spans residues 200 to 224 (LYATVLLLLIVAVLGCNISVILNLI). The Cytoplasmic segment spans residues 225 to 262 (RMQLRSKRSRCGLSGSSLRGPGSRRRGERTSMAEETDH). The span at 235–245 (CGLSGSSLRGP) shows a compositional bias: low complexity. Residues 235 to 255 (CGLSGSSLRGPGSRRRGERTS) are disordered. The helical transmembrane segment at 263–286 (LILLAIMTITFAVCSLPFTIFAYM) threads the bilayer. Residues 287–299 (DETSSRKEKWDLR) are Extracellular-facing. Residues 300–323 (ALRFLSVNSIIDPWVFVILRPPVL) traverse the membrane as a helical segment. Over 324 to 357 (RLMRSVLCCRTSLRAPEAPGASCSTQQTDLCGQL) the chain is Cytoplasmic.

It belongs to the G-protein coupled receptor 1 family.

The protein resides in the cell membrane. In terms of biological role, receptor for prostaglandin E2 (PGE2). The activity of this receptor is mediated by G(s) proteins that stimulate adenylate cyclase. The subsequent raise in intracellular cAMP is responsible for the relaxing effect of this receptor on smooth muscle. This chain is Prostaglandin E2 receptor EP2 subtype (Ptger2), found in Rattus norvegicus (Rat).